We begin with the raw amino-acid sequence, 138 residues long: Protein PsiE homolog (138 aa).

4 helical membrane-spanning segments follow: residues 14–34, 56–76, 84–104, and 109–129; these read LQALLNVCLFFLAIALSGLLI, YEMLGELLIFFMYFEFIALII, HFPLRYFIYIGITAVIRLIII, and AISTFWWAMAILAMICAFFIV.

It belongs to the PsiE family.

It localises to the cell membrane. The polypeptide is Protein PsiE homolog (Bacillus velezensis (strain DSM 23117 / BGSC 10A6 / LMG 26770 / FZB42) (Bacillus amyloliquefaciens subsp. plantarum)).